A 415-amino-acid chain; its full sequence is Serine hydroxymethyltransferase (415 aa).

(6S)-5,6,7,8-tetrahydrofolate contacts are provided by residues leucine 117 and 121 to 123; that span reads GHL. An N6-(pyridoxal phosphate)lysine modification is found at lysine 226.

This sequence belongs to the SHMT family. In terms of assembly, homodimer. The cofactor is pyridoxal 5'-phosphate.

The protein resides in the cytoplasm. The catalysed reaction is (6R)-5,10-methylene-5,6,7,8-tetrahydrofolate + glycine + H2O = (6S)-5,6,7,8-tetrahydrofolate + L-serine. Its pathway is one-carbon metabolism; tetrahydrofolate interconversion. The protein operates within amino-acid biosynthesis; glycine biosynthesis; glycine from L-serine: step 1/1. Its function is as follows. Catalyzes the reversible interconversion of serine and glycine with tetrahydrofolate (THF) serving as the one-carbon carrier. This reaction serves as the major source of one-carbon groups required for the biosynthesis of purines, thymidylate, methionine, and other important biomolecules. Also exhibits THF-independent aldolase activity toward beta-hydroxyamino acids, producing glycine and aldehydes, via a retro-aldol mechanism. This Dehalococcoides mccartyi (strain ATCC BAA-2266 / KCTC 15142 / 195) (Dehalococcoides ethenogenes (strain 195)) protein is Serine hydroxymethyltransferase.